A 109-amino-acid chain; its full sequence is MKLSIIIIATSLVIAVVAFPSKDSKAIENDKTEQRMEIVVQETARACSKQIGDKCKRNCECCGKTVVCGTIYVGGKEVNQCMDKTSDNAILNGLGKGMNFMENTFSFCV.

An N-terminal signal peptide occupies residues 1 to 18; sequence MKLSIIIIATSLVIAVVA. A propeptide spanning residues 19–46 is cleaved from the precursor; that stretch reads FPSKDSKAIENDKTEQRMEIVVQETARA. Disulfide bonds link Cys-47-Cys-62, Cys-55-Cys-68, Cys-59-Cys-108, and Cys-61-Cys-81.

It belongs to the neurotoxin 25 family. F7 subfamily. As to expression, expressed by the venom gland.

It is found in the secreted. Its function is as follows. Putative ion channel inhibitor. In Cyriopagopus hainanus (Chinese bird spider), this protein is Hainantoxin-XVIII-7.